The sequence spans 365 residues: 3-dehydroquinate synthase (365 aa).

NAD(+) is bound by residues 107-111, 131-132, Lys144, and Lys153; these read GVIGD and TT. Zn(2+) contacts are provided by Glu186, His251, and His268.

The protein belongs to the sugar phosphate cyclases superfamily. Dehydroquinate synthase family. It depends on Co(2+) as a cofactor. Zn(2+) serves as cofactor. NAD(+) is required as a cofactor.

It is found in the cytoplasm. The enzyme catalyses 7-phospho-2-dehydro-3-deoxy-D-arabino-heptonate = 3-dehydroquinate + phosphate. It participates in metabolic intermediate biosynthesis; chorismate biosynthesis; chorismate from D-erythrose 4-phosphate and phosphoenolpyruvate: step 2/7. Its function is as follows. Catalyzes the conversion of 3-deoxy-D-arabino-heptulosonate 7-phosphate (DAHP) to dehydroquinate (DHQ). This chain is 3-dehydroquinate synthase, found in Picosynechococcus sp. (strain ATCC 27264 / PCC 7002 / PR-6) (Agmenellum quadruplicatum).